The chain runs to 228 residues: Ureidoacrylate amidohydrolase RutB (228 aa).

The active-site Proton acceptor is the Asp23. The active site involves Lys132. Cys165 acts as the Nucleophile in catalysis.

This sequence belongs to the isochorismatase family. RutB subfamily.

The catalysed reaction is (Z)-3-ureidoacrylate + H2O + H(+) = (Z)-3-aminoacrylate + NH4(+) + CO2. The enzyme catalyses (Z)-3-ureidoacrylate + H2O = (Z)-3-aminoacrylate + carbamate + H(+). It carries out the reaction (Z)-2-methylureidoacrylate + H2O + H(+) = (Z)-2-methylaminoacrylate + NH4(+) + CO2. In terms of biological role, hydrolyzes ureidoacrylate to form aminoacrylate and carbamate. The carbamate hydrolyzes spontaneously, thereby releasing one of the nitrogen atoms of the pyrimidine ring as ammonia and one of its carbon atoms as CO2. The sequence is that of Ureidoacrylate amidohydrolase RutB from Agrobacterium fabrum (strain C58 / ATCC 33970) (Agrobacterium tumefaciens (strain C58)).